A 704-amino-acid chain; its full sequence is Transmembrane protein DDB_G0274347 (704 aa).

A disordered region spans residues 37 to 145; it reads VEQRDEVNDE…NNYNNNNTPT (109 aa). A compositionally biased stretch (acidic residues) spans 43-67; it reads VNDEFQEEEEELEDDDDDEDDEDEI. Over residues 85-99 the composition is skewed to basic and acidic residues; that stretch reads HNDKEKEKKKDKQEE. Residues 100–113 show a composition bias toward acidic residues; that stretch reads YIDSDDDDDDDGDE. A compositionally biased stretch (low complexity) spans 114–142; sequence NYYLNNNNNNNNNINNNNNYNNNNYNNNN. N-linked (GlcNAc...) asparagine glycosylation is present at Asn-166. A helical membrane pass occupies residues 255 to 275; sequence ALISMALLISLVAIIFYLPLP. N-linked (GlcNAc...) asparagine glycosylation is present at Asn-354. Transmembrane regions (helical) follow at residues 370–390, 414–434, and 513–533; these read LKIF…WLFA, TLLV…LYFI, and LVSF…FLIS. The span at 550–565 shows a compositional bias: low complexity; it reads TTTTTINTTTNTTSNT. Positions 550-576 are disordered; the sequence is TTTTTINTTTNTTSNTSQQSNPLSKRL. Residues Asn-556, Asn-560, and Asn-564 are each glycosylated (N-linked (GlcNAc...) asparagine). Positions 566–576 are enriched in polar residues; that stretch reads SQQSNPLSKRL. A run of 2 helical transmembrane segments spans residues 609 to 629 and 638 to 658; these read FIIV…GVPP and IFFI…LIII.

The protein resides in the membrane. This is Transmembrane protein DDB_G0274347 from Dictyostelium discoideum (Social amoeba).